The chain runs to 504 residues: MNQPILELKGIEKAFPGVKALDNACLNVYPGKVMALMGENGAGKSTLMKSLTGIYAMDAGEIRYQGKAVNFDGPRHSQEAGISIIHQELNLIPELTIAENIFLGREKTNAFGGIKWAEMFREADDLLKRLNVKHHSRQLLGELSLGEQQMVEIAKALSFKSQVIIMDEPTDALTDTETESLFKVINELRAEGCGIVYISHRLKEIFEICDDITVLRDGKFIGERAVADTDEDGLIEMMVGRRLDEQYPRIDVRHGETCLEVTNLTGAGVNNVSFKLDRGEILGVSGLMGAGRSELMKVIYGALKRESGDIKLNGKTINPVTPQDGLANGIAYISEDRKGDGLVLGLSVKENMSLCSLEQLSKGVQLKHYEEVTAVEDFIRLFNIKTPTRDQIIGNLSGGNQQKVAIAKGLMTRPKVLILDEPTRGVDVGAKKEIYQLINQFKAEGMSIILVSSEMPEVLGMSDRIIVMHEGRISGEFMAADANQEKLLACAVGKTTEQNNEVAA.

2 ABC transporter domains span residues 6–242 (LELK…VGRR) and 252–495 (VRHG…VGKT). 38-45 (GENGAGKS) contributes to the ATP binding site.

This sequence belongs to the ABC transporter superfamily. Ribose importer (TC 3.A.1.2.1) family. The complex is composed of an ATP-binding protein (RbsA), two transmembrane proteins (RbsC) and a solute-binding protein (RbsB).

Its subcellular location is the cell inner membrane. The enzyme catalyses D-ribose(out) + ATP + H2O = D-ribose(in) + ADP + phosphate + H(+). Part of the ABC transporter complex RbsABC involved in ribose import. Responsible for energy coupling to the transport system. In Photobacterium profundum (strain SS9), this protein is Ribose import ATP-binding protein RbsA.